The primary structure comprises 115 residues: Large ribosomal subunit protein bL20 (115 aa).

Belongs to the bacterial ribosomal protein bL20 family.

Binds directly to 23S ribosomal RNA and is necessary for the in vitro assembly process of the 50S ribosomal subunit. It is not involved in the protein synthesizing functions of that subunit. The chain is Large ribosomal subunit protein bL20 from Malacoplasma penetrans (strain HF-2) (Mycoplasma penetrans).